The primary structure comprises 246 residues: Putative S-adenosyl-L-methionine-dependent methyltransferase Mflv_0168 (246 aa).

Residues aspartate 112 and 141-142 each bind S-adenosyl-L-methionine; that span reads DL.

It belongs to the UPF0677 family.

Functionally, exhibits S-adenosyl-L-methionine-dependent methyltransferase activity. This chain is Putative S-adenosyl-L-methionine-dependent methyltransferase Mflv_0168, found in Mycolicibacterium gilvum (strain PYR-GCK) (Mycobacterium gilvum (strain PYR-GCK)).